A 186-amino-acid chain; its full sequence is MSKSLQKPTILNVETVARSRLFTVESVDLEFSNGVRRVYERMRPTNREAVMIVPIVDDHLILIREYAVGTESYELGFSKGLIDPGESVYEAANRELKEEVGFGANDLTFLKKLSMAPSYFSSKMNIVVAQDLYPESLEGDEPEPLPQVRWPLAHMMDLLEDPDFNEARNVSALFLVREWLKGQGRV.

Position 40 (Glu-40) interacts with substrate. The 128-residue stretch at Thr-45–Ala-172 folds into the Nudix hydrolase domain. A Nudix box motif is present at residues Gly-80–Gly-101. A divalent metal cation contacts are provided by Glu-95 and Glu-99. Position 118 (Ser-118) interacts with substrate.

Belongs to the Nudix hydrolase family. Homodimer. Mg(2+) serves as cofactor.

The catalysed reaction is ADP-D-ribose + H2O = D-ribose 5-phosphate + AMP + 2 H(+). In terms of biological role, active on adenosine(5')triphospho(5')adenosine (Ap3A), ADP-ribose, NADH, adenosine(5')diphospho(5')adenosine (Ap2A). The protein is ADP compounds hydrolase NudE (nudE) of Escherichia coli (strain K12).